The sequence spans 418 residues: Deubiquitinase and deneddylase Dub1 (418 aa).

Residues 1–10 show a composition bias toward polar residues; it reads MLSPTNSISK. The interval 1–23 is disordered; the sequence is MLSPTNSISKTAPVPPQDSSKPV. Residues 40 to 60 traverse the membrane as a helical segment; sequence TALAVLLVVVTLGLILLFYSF. A disordered region spans residues 72–144; it reads TRPSTKEQPT…PLPPKAPKPV (73 aa). Pro residues predominate over residues 86 to 141; sequence VPLPSPPLAVPRPSTPPPPVISRPSTPPAPTPAISPPSTPSAPKPSTPPPLPPKAP. Active-site residues include H288, D305, and C358.

The protein belongs to the peptidase C48 family.

Its subcellular location is the secreted. It localises to the host cell. The protein resides in the membrane. Effector proteins function to alter host cell physiology and promote bacterial survival in host tissues. This protease possesses deubiquitinating and deneddylating activities. This chain is Deubiquitinase and deneddylase Dub1 (cdu1), found in Chlamydia trachomatis serovar B (strain Jali20/OT).